The following is a 136-amino-acid chain: Alpha-2-purothionin (136 aa).

Residues 1–27 form the signal peptide; that stretch reads MGSKGLKGVMVCLLILGLVLEQVQVEG. Cystine bridges form between Cys-30–Cys-66, Cys-31–Cys-58, Cys-39–Cys-56, and Cys-43–Cys-52. The propeptide at 73 to 136 is acidic domain; that stretch reads LALESNSDEP…GDAGLTSLDA (64 aa).

It belongs to the plant thionin (TC 1.C.44) family. 4 C-C subfamily.

The protein localises to the secreted. Thionins are small plant proteins which are toxic to animal cells. They seem to exert their toxic effect at the level of the cell membrane. Their precise function is not known. The chain is Alpha-2-purothionin (THI1.2) from Triticum aestivum (Wheat).